A 358-amino-acid polypeptide reads, in one-letter code: UDP-N-acetylglucosamine--N-acetylmuramyl-(pentapeptide) pyrophosphoryl-undecaprenol N-acetylglucosamine transferase (358 aa).

UDP-N-acetyl-alpha-D-glucosamine is bound by residues 13–15, R166, S196, and Q291; that span reads TAG.

It belongs to the glycosyltransferase 28 family. MurG subfamily.

The protein localises to the cell membrane. It catalyses the reaction di-trans,octa-cis-undecaprenyl diphospho-N-acetyl-alpha-D-muramoyl-L-alanyl-D-glutamyl-meso-2,6-diaminopimeloyl-D-alanyl-D-alanine + UDP-N-acetyl-alpha-D-glucosamine = di-trans,octa-cis-undecaprenyl diphospho-[N-acetyl-alpha-D-glucosaminyl-(1-&gt;4)]-N-acetyl-alpha-D-muramoyl-L-alanyl-D-glutamyl-meso-2,6-diaminopimeloyl-D-alanyl-D-alanine + UDP + H(+). It participates in cell wall biogenesis; peptidoglycan biosynthesis. Its function is as follows. Cell wall formation. Catalyzes the transfer of a GlcNAc subunit on undecaprenyl-pyrophosphoryl-MurNAc-pentapeptide (lipid intermediate I) to form undecaprenyl-pyrophosphoryl-MurNAc-(pentapeptide)GlcNAc (lipid intermediate II). This Clostridium botulinum (strain Alaska E43 / Type E3) protein is UDP-N-acetylglucosamine--N-acetylmuramyl-(pentapeptide) pyrophosphoryl-undecaprenol N-acetylglucosamine transferase.